A 152-amino-acid polypeptide reads, in one-letter code: MDEKEIQRLVEEVSLQYFGMPFLHKVKFNSRLRTTGGRYLLKSHNVELNYRYYEMYGKEELIGIIKHELCHYHLHITGRGYKHRDRDFRELLKKVDAPRFCKRMINEEKEKKIYKYECMECLLQYVRRRQINTKRYVCGKCKGKLKPISKTS.

In terms of domain architecture, SprT-like spans 7–147; it reads QRLVEEVSLQ…CGKCKGKLKP (141 aa). Position 67 (H67) interacts with Zn(2+). Residue E68 is part of the active site. H71 serves as a coordination point for Zn(2+).

Belongs to the SprT family. The cofactor is Zn(2+).

Its subcellular location is the cytoplasm. The sequence is that of Protein SprT-like from Bacillus cereus (strain G9842).